Consider the following 383-residue polypeptide: uncharacterized protein (383 aa).

A YcaO domain is found at 58–383 (GKGATRTQAR…RVGRRIRSSI (326 aa)). Residues 80-100 (AERKPEDETFTAHPEDCDGLD) form a disordered region.

This is an uncharacterized protein from Methanothermobacter thermautotrophicus (strain ATCC 29096 / DSM 1053 / JCM 10044 / NBRC 100330 / Delta H) (Methanobacterium thermoautotrophicum).